Consider the following 183-residue polypeptide: Streptavidin-V1 (183 aa).

Residues M1 to A24 form the signal peptide. Residues A37–P159 form the Avidin-like domain. Residues Y67 and Y78 each contribute to the biotin site. Residues R83–D85 carry the Cell attachment site; atypical motif. Biotin contacts are provided by W116, W132, and W144.

This sequence belongs to the avidin/streptavidin family. Homotetramer.

It localises to the secreted. Its function is as follows. The biological function of streptavidin is not known. Forms a strong non-covalent specific complex with biotin (one molecule of biotin per subunit of streptavidin). The chain is Streptavidin-V1 from Streptomyces violaceus (Streptomyces venezuelae).